Reading from the N-terminus, the 425-residue chain is Dihydroorotase (425 aa).

Residues histidine 56 and histidine 58 each contribute to the Zn(2+) site. Substrate contacts are provided by residues 58 to 60 and asparagine 90; that span reads HYR. Zn(2+) contacts are provided by aspartate 148, histidine 175, and histidine 228. Asparagine 274 contributes to the substrate binding site. Aspartate 301 serves as a coordination point for Zn(2+). Residue aspartate 301 is part of the active site. Residues histidine 305 and 319-320 contribute to the substrate site; that span reads FG.

The protein belongs to the metallo-dependent hydrolases superfamily. DHOase family. Class I DHOase subfamily. It depends on Zn(2+) as a cofactor.

The catalysed reaction is (S)-dihydroorotate + H2O = N-carbamoyl-L-aspartate + H(+). Its pathway is pyrimidine metabolism; UMP biosynthesis via de novo pathway; (S)-dihydroorotate from bicarbonate: step 3/3. In terms of biological role, catalyzes the reversible cyclization of carbamoyl aspartate to dihydroorotate. This Lactobacillus delbrueckii subsp. bulgaricus (strain ATCC 11842 / DSM 20081 / BCRC 10696 / JCM 1002 / NBRC 13953 / NCIMB 11778 / NCTC 12712 / WDCM 00102 / Lb 14) protein is Dihydroorotase.